Consider the following 127-residue polypeptide: Modulator protein MzrA (127 aa).

At 1–10 (MGLQNMTLRR) the chain is on the cytoplasmic side. Residues 11-31 (FTLSMSALLLLCALLWLWAAL) traverse the membrane as a helical segment. At 32–127 (EQQESSLAIR…RLRDAPHRLG (96 aa)) the chain is on the periplasmic side.

Belongs to the MzrA family. Interacts with EnvZ.

It localises to the cell inner membrane. Functionally, modulates the activity of the EnvZ/OmpR two-component regulatory system, probably by directly modulating EnvZ enzymatic activity and increasing stability of phosphorylated OmpR. In Enterobacter lignolyticus (strain SCF1), this protein is Modulator protein MzrA.